The sequence spans 144 residues: Urease subunit beta (144 aa).

Belongs to the urease beta subunit family. As to quaternary structure, heterotrimer of UreA (gamma), UreB (beta) and UreC (alpha) subunits. Three heterotrimers associate to form the active enzyme.

It localises to the cytoplasm. It carries out the reaction urea + 2 H2O + H(+) = hydrogencarbonate + 2 NH4(+). The protein operates within nitrogen metabolism; urea degradation; CO(2) and NH(3) from urea (urease route): step 1/1. This Yersinia pseudotuberculosis serotype O:1b (strain IP 31758) protein is Urease subunit beta.